We begin with the raw amino-acid sequence, 419 residues long: uncharacterized protein (419 aa).

The protein belongs to the MT-A70-like family.

The protein resides in the cytoplasm. This is an uncharacterized protein from Schizosaccharomyces pombe (strain 972 / ATCC 24843) (Fission yeast).